The chain runs to 554 residues: MNQLAMVNTTITRPLANYHSSVWGNYFLSYTPQLTEISSQEKRELEELKEKVRQMLVETPDNSTQKLVLIDTIQRLGVAYHFENHIKISIQNIFDEFEKNKNKDNDDDLCVVALRFRLVRGQRHYMSSDVFTRFTNDDGKFKETLTKDVQGLLNLYEATHLRVHGEEILEEALSFTVTHLKSMSPKLDNSLKAQVSEALFQPIHTNIPRVVARKYIRIYENIESHDDLLLKFAKLDFHILQKMHQRELSELTRWWKDLDHSNKYPYARDKLVECYFWAIGVYFGPQYKRARRTLTKLIVIITITDDLYDAYATYDELVPYTNAVERCEISAMHSISPYMRPLYQVFLDYFDEMEEELTKDGKAHYVYYAKIETNKWIKSYLKEAEWLKNDIIPKCEEYKRNATITISNQMNLITCLIVAGEFISKETFEWMINESLIAPASSLINRLKDDIIGHEHEQQREHGASFIECYVKEYRASKQEAYVEARRQITNAWKDINTDYLHATQVPTFVLEPALNLSRLVDILQEDDFTDSQNFLKDTITLLFVDSVNSTSCG.

The Mg(2+) site is built by D305, D309, D449, and E457. Residues 305–309 (DDLYD) carry the DDXXD motif motif.

This sequence belongs to the terpene synthase family. Tpsa subfamily. The cofactor is Mg(2+). Mn(2+) serves as cofactor.

It catalyses the reaction (2E,6E)-farnesyl diphosphate = (E)-gamma-bisabolene + diphosphate. It carries out the reaction (2Z,6Z)-farnesyl diphosphate = (E)-gamma-bisabolene + diphosphate. The catalysed reaction is (2Z,6Z)-farnesyl diphosphate = (E)-alpha-bisabolene + diphosphate. The enzyme catalyses (2Z,6Z)-farnesyl diphosphate = (Z)-beta-farnesene + diphosphate. It catalyses the reaction (2E,6E)-farnesyl diphosphate = (E)-beta-farnesene + diphosphate. It carries out the reaction (2E,6E)-farnesyl diphosphate = (+)-thujopsene + diphosphate. The catalysed reaction is (2Z,6Z)-farnesyl diphosphate = (E)-beta-farnesene + diphosphate. The enzyme catalyses (2E,6E)-farnesyl diphosphate = (Z)-beta-farnesene + diphosphate. It catalyses the reaction (2Z,6Z)-farnesyl diphosphate = beta-acoradiene + diphosphate. It carries out the reaction (2Z,6Z)-farnesyl diphosphate = alpha-acoradiene + diphosphate. The catalysed reaction is (2Z,6Z)-farnesyl diphosphate = beta-bisabolene + diphosphate. The enzyme catalyses (2E,6E)-farnesyl diphosphate = (-)-alpha-cedrene + diphosphate. It catalyses the reaction (2E,6E)-farnesyl diphosphate = beta-bisabolene + diphosphate. It carries out the reaction (2E,6E)-farnesyl diphosphate = beta-acoradiene + diphosphate. The catalysed reaction is (2Z,6Z)-farnesyl diphosphate = (-)-alpha-cedrene + diphosphate. The enzyme catalyses (2E)-geranyl diphosphate = terpinolene + diphosphate. It catalyses the reaction (2E)-geranyl diphosphate = limonene + diphosphate. It carries out the reaction (2E)-geranyl diphosphate = beta-myrcene + diphosphate. It functions in the pathway secondary metabolite biosynthesis; terpenoid biosynthesis. Sesquiterpene synthase involved in the biosynthesis of volatile compounds. Mediates the conversion of (2E,6E)-farnesyl diphosphate ((EE)-FPP) into (+)-thujopsene, beta-bisabolene, alpha-cederene, beta-acoradiene, (E)-gamma-bisabolene, (Z)-alpha-bisabolene, (Z)-beta-farnesene and (E)-beta-farnesene, and of (2Z,6Z)-farnesyl diphosphate ((ZZ)-FPP) into (E)-gamma-bisabolene, (E)-alpha-bisabolene, (E)-beta-farnesene, (Z)-beta-farnesene, beta-bisabolene, beta-acoradiene and alpha-acoradiene. Can act with a low efficiency as a monoterpene synthase with geranyl diphosphate (GPP) as substrate, thus producing beta-myrcene, limonene and terpinolene. This chain is Sesquiterpene synthase 14b, found in Solanum habrochaites (Wild tomato).